Consider the following 169-residue polypeptide: Allophycocyanin subunit beta-18 (169 aa).

Position 72 is an N4-methylasparagine (Asn-72). Cys-82 lines the (2R,3E)-phycocyanobilin pocket.

This sequence belongs to the phycobiliprotein family. In terms of assembly, heterodimer of an alpha and a beta chain. In terms of processing, contains one covalently linked phycocyanobilin chromophore.

The protein resides in the plastid. It localises to the cyanelle thylakoid membrane. Light-harvesting photosynthetic bile pigment-protein from the phycobiliprotein complex. Allophycocyanin has a maximum absorption at approximately 650 nanometers. This is Allophycocyanin subunit beta-18 (apcF) from Cyanophora paradoxa.